Consider the following 156-residue polypeptide: Small ribosomal subunit protein uS7 (156 aa).

Belongs to the universal ribosomal protein uS7 family. In terms of assembly, part of the 30S ribosomal subunit. Contacts proteins S9 and S11.

Functionally, one of the primary rRNA binding proteins, it binds directly to 16S rRNA where it nucleates assembly of the head domain of the 30S subunit. Is located at the subunit interface close to the decoding center, probably blocks exit of the E-site tRNA. In Lactobacillus acidophilus (strain ATCC 700396 / NCK56 / N2 / NCFM), this protein is Small ribosomal subunit protein uS7.